Consider the following 198-residue polypeptide: Na(+)-translocating NADH-quinone reductase subunit E (198 aa).

6 helical membrane-spanning segments follow: residues 11-31 (SIFI…FLAV), 39-59 (FGLG…NNLV), 77-97 (FLNF…LEMV), 110-130 (GIFL…SFMV), 140-160 (IVYG…LAGI), and 176-196 (LGIT…FSGV).

This sequence belongs to the NqrDE/RnfAE family. In terms of assembly, composed of six subunits; NqrA, NqrB, NqrC, NqrD, NqrE and NqrF. In terms of processing, the N-terminus is blocked.

It localises to the cell inner membrane. The enzyme catalyses a ubiquinone + n Na(+)(in) + NADH + H(+) = a ubiquinol + n Na(+)(out) + NAD(+). This reaction is tightly coupled to the Na(+) pumping activity and specifically requires Na(+) for activity. Inhibited by korormicin and 2-N-heptyl-4-hydroxyquinoline N-oxide (HQNO). Its function is as follows. NQR complex catalyzes the reduction of ubiquinone-1 to ubiquinol by two successive reactions, coupled with the transport of Na(+) ions from the cytoplasm to the periplasm. NqrA to NqrE are probably involved in the second step, the conversion of ubisemiquinone to ubiquinol. In Vibrio alginolyticus, this protein is Na(+)-translocating NADH-quinone reductase subunit E.